We begin with the raw amino-acid sequence, 79 residues long: MSAHKVQIGLSSGQFRVALQVPSVRLKGLGSFHTGSIVLPSQGSLREDQISLHNQDGLHKVMREVLGYERNSYKKFFLR.

A propeptide spans 1–56 (MSAHKVQIGLSSGQFRVALQVPSVRLKGLGSFHTGSIVLPSQGSLREDQISLHNQD) (removed in mature form).

Its function is as follows. Has antifungal activity against C.albicans. Has antibacterial activity against the Gram-positive bacterium S.aureus and the Gram-negative bacterium E.coli. Lacks hemolytic activity against rabbit erythrocytes. This is Ixosin from Ixodes sinensis (Hard tick).